Consider the following 329-residue polypeptide: Delta(7)-sterol 5(6)-desaturase erg32 (329 aa).

2 helical membrane-spanning segments follow: residues 67 to 87 (LFLI…SFAY) and 149 to 169 (FYLF…IYWI). The region spanning 156–281 (ALFLLFSDFL…FFTLFDRLCS (126 aa)) is the Fatty acid hydroxylase domain. Positions 170–175 (HRALHH) match the Histidine box-1 motif. A Histidine box-2 motif is present at residues 183-187 (HKLHH). The chain crosses the membrane as a helical span at residues 210-230 (LPYHMFPFFFPLNKYVYLLLF). The Histidine box-3 signature appears at 257–262 (HHAAHH).

It belongs to the sterol desaturase family. Fe cation is required as a cofactor.

The protein localises to the endoplasmic reticulum membrane. Its subcellular location is the golgi apparatus membrane. The catalysed reaction is episterol + 2 Fe(II)-[cytochrome b5] + O2 + 2 H(+) = 5-dehydroepisterol + 2 Fe(III)-[cytochrome b5] + 2 H2O. It functions in the pathway steroid metabolism; ergosterol biosynthesis. Its function is as follows. C-5 sterol desaturase; part of the third module of ergosterol biosynthesis pathway that includes by the late steps of the pathway. Erg31 and erg32 catalyze the introduction of a C-5 double bond in the B ring to produce 5-dehydroepisterol. The third module or late pathway involves the ergosterol synthesis itself through consecutive reactions that mainly occur in the endoplasmic reticulum (ER) membrane. Firstly, the squalene synthase erg9 catalyzes the condensation of 2 farnesyl pyrophosphate moieties to form squalene, which is the precursor of all steroids. Secondly, squalene is converted into lanosterol by the consecutive action of the squalene epoxidase erg1 and the lanosterol synthase erg7. The lanosterol 14-alpha-demethylase erg11/cyp1 catalyzes C14-demethylation of lanosterol to produce 4,4'-dimethyl cholesta-8,14,24-triene-3-beta-ol. In the next steps, a complex process involving various demethylation, reduction and desaturation reactions catalyzed by the C-14 reductase erg24 and the C-4 demethylation complex erg25-erg26-erg27 leads to the production of zymosterol. Erg28 likely functions in the C-4 demethylation complex reaction by tethering erg26 and Erg27 to the endoplasmic reticulum or to facilitate interaction between these proteins. Then, the sterol 24-C-methyltransferase erg6 catalyzes the methyl transfer from S-adenosyl-methionine to the C-24 of zymosterol to form fecosterol. The C-8 sterol isomerase erg2 catalyzes the reaction which results in unsaturation at C-7 in the B ring of sterols and thus converts fecosterol to episterol. The sterol-C5-desaturases erg31 and erg32 then catalyze the introduction of a C-5 double bond in the B ring to produce 5-dehydroepisterol. The C-22 sterol desaturase erg5 further converts 5-dehydroepisterol into ergosta-5,7,22,24(28)-tetraen-3beta-ol by forming the C-22(23) double bond in the sterol side chain. Finally, ergosta-5,7,22,24(28)-tetraen-3beta-ol is substrate of the C-24(28) sterol reductase erg4 to produce ergosterol. In the genus Schizosaccharomyces, a second route exists between lanosterol and fecosterol, via the methylation of lanosterol to eburicol by erg6, followed by C14-demethylation by erg11/cyp1 and C4-demethylation by the demethylation complex erg25-erg26-erg27. This Schizosaccharomyces pombe (strain 972 / ATCC 24843) (Fission yeast) protein is Delta(7)-sterol 5(6)-desaturase erg32.